Here is a 143-residue protein sequence, read N- to C-terminus: MTYSITLRVFQRNPGRGFFSIVEKTVFHYANGGTWSEAKGTHTLTMGGSGTSGVLRFMSDKGELITVAVGVHNYKRWCDVVTGLKPEETALVINPQYYNNGPRAYTREKQLAEYNVTSVVGTRFEVKYTVVEGNNLEANVIFS.

Beta-D-Gal-(1-&gt;3)-alpha-D-GalNAc is bound by residues A30, S49–G50, and H72–N73. N-acetyl-alpha-D-galactosamine is bound by residues S49–G50 and H72–N73. N,N'-diacetylchitobiose is bound by residues D79–T82, R103, and Y114. N-acetyl-alpha-D-glucosamine-binding positions include D79–T82, R103, and Y114.

It belongs to the fungal fruit body lectin family. As to quaternary structure, homotetramer.

Its function is as follows. Lectin that recognizes O-linked galactose-beta-1,3-N-acetylgalactosamine, a disaccharide (Thomsen-Friedenreich antigen or T-disaccharide), present on cell surface glycoproteins. Can also bind chitin, N,N'-diacetylchitobiose, N-acetylgalactosamine and N-acetylglucosamine. Inhibits proliferation of colon, breast and liver cancer cell lines (in vitro). The chain is Boletus edulis lectin from Boletus edulis (King bolete).